A 388-amino-acid chain; its full sequence is Probable Na(+)/H(+) antiporter 3 (388 aa).

A run of 12 helical transmembrane segments spans residues 2–22 (ESYY…PNLL), 27–47 (IPAI…GLNI), 53–73 (TLKI…GLEV), 81–101 (EFKN…VGGY), 102–122 (LIGQ…VIFA), 146–166 (IILS…SVVI), 175–195 (VGTF…AIPS), 215–235 (VLFI…HPIV), 263–283 (AIGY…ETNI), 294–314 (LLLI…FIAL), 325–345 (TIGG…ASIG), and 354–374 (EIFV…PIVV).

The protein belongs to the monovalent cation:proton antiporter 1 (CPA1) transporter (TC 2.A.36) family.

The protein resides in the cell membrane. Its function is as follows. This is probably a Na(+)/H(+) antiporter. The protein is Probable Na(+)/H(+) antiporter 3 of Methanocaldococcus jannaschii (strain ATCC 43067 / DSM 2661 / JAL-1 / JCM 10045 / NBRC 100440) (Methanococcus jannaschii).